The following is a 937-amino-acid chain: Alanine--tRNA ligase (937 aa).

Zn(2+) is bound by residues His-626, His-630, Cys-727, and His-731.

It belongs to the class-II aminoacyl-tRNA synthetase family. It depends on Zn(2+) as a cofactor.

It is found in the cytoplasm. The catalysed reaction is tRNA(Ala) + L-alanine + ATP = L-alanyl-tRNA(Ala) + AMP + diphosphate. In terms of biological role, catalyzes the attachment of alanine to tRNA(Ala) in a two-step reaction: alanine is first activated by ATP to form Ala-AMP and then transferred to the acceptor end of tRNA(Ala). Also edits incorrectly charged Ser-tRNA(Ala) and Gly-tRNA(Ala) via its editing domain. This is Alanine--tRNA ligase from Opitutus terrae (strain DSM 11246 / JCM 15787 / PB90-1).